The sequence spans 1034 residues: Error-prone DNA polymerase (1034 aa).

This sequence belongs to the DNA polymerase type-C family. DnaE2 subfamily.

It localises to the cytoplasm. The catalysed reaction is DNA(n) + a 2'-deoxyribonucleoside 5'-triphosphate = DNA(n+1) + diphosphate. DNA polymerase involved in damage-induced mutagenesis and translesion synthesis (TLS). It is not the major replicative DNA polymerase. The chain is Error-prone DNA polymerase from Pseudomonas fluorescens (strain ATCC BAA-477 / NRRL B-23932 / Pf-5).